A 195-amino-acid polypeptide reads, in one-letter code: uncharacterized protein (195 aa).

2 disordered regions span residues 1 to 54 (MPKG…SNKI) and 173 to 195 (LAGA…KPIS). Positions 7–20 (KPNEKKEELEKFAK) are enriched in basic and acidic residues. Residues 45–54 (QNDSSSSNKI) show a composition bias toward polar residues. The stretch at 48–97 (SSSSNKIVLSQAEKDLLRTELDKTEEEISTLKQVLSARQKHAAELKRKLG) forms a coiled coil.

Belongs to the TPD52 family.

This is an uncharacterized protein from Caenorhabditis elegans.